A 348-amino-acid polypeptide reads, in one-letter code: GMP reductase 2 (348 aa).

NADP(+)-binding positions include 26–27, Lys-78, 129–131, and 180–181; these read SR, DVA, and IG. Residues Gly-181, Gly-183, and Cys-186 each coordinate K(+). The active-site Thioimidate intermediate is the Cys-186. Residue Thr-188 is the Proton donor/acceptor of the active site. Position 189 (Arg-189) interacts with K(+). Residues 219–221, 242–243, 268–270, and 286–290 contribute to the GMP site; these read DGG, GG, GMS, and RASEG. NADP(+) contacts are provided by residues Met-269 and 285-286; that span reads YR. Residue Lys-291 is modified to N6-acetyllysine. 314–317 lines the NADP(+) pocket; the sequence is STCT.

This sequence belongs to the IMPDH/GMPR family. GuaC type 1 subfamily. In terms of assembly, homotetramer.

It catalyses the reaction IMP + NH4(+) + NADP(+) = GMP + NADPH + 2 H(+). Functionally, catalyzes the irreversible NADPH-dependent deamination of GMP to IMP. It functions in the conversion of nucleobase, nucleoside and nucleotide derivatives of G to A nucleotides, and in maintaining the intracellular balance of A and G nucleotides. Plays a role in modulating cellular differentiation. This Bos taurus (Bovine) protein is GMP reductase 2.